Here is a 205-residue protein sequence, read N- to C-terminus: Large ribosomal subunit protein bL9 (205 aa).

Positions 160 to 205 are disordered; that stretch reads RDRKSRNAAAASEVQDAPVEDGGDEVVSVDSVAAEDGGADASGGTA. Over residues 184-195 the composition is skewed to low complexity; that stretch reads EVVSVDSVAAED.

Belongs to the bacterial ribosomal protein bL9 family.

Functionally, binds to the 23S rRNA. This is Large ribosomal subunit protein bL9 from Anaplasma phagocytophilum (strain HZ).